The following is a 185-amino-acid chain: Peptide deformylase 2 (185 aa).

The Fe cation site is built by Cys108 and His150. The active site involves Glu151. His154 serves as a coordination point for Fe cation.

The protein belongs to the polypeptide deformylase family. The cofactor is Fe(2+).

It carries out the reaction N-terminal N-formyl-L-methionyl-[peptide] + H2O = N-terminal L-methionyl-[peptide] + formate. In terms of biological role, removes the formyl group from the N-terminal Met of newly synthesized proteins. Requires at least a dipeptide for an efficient rate of reaction. N-terminal L-methionine is a prerequisite for activity but the enzyme has broad specificity at other positions. This chain is Peptide deformylase 2, found in Nitrosomonas europaea (strain ATCC 19718 / CIP 103999 / KCTC 2705 / NBRC 14298).